Reading from the N-terminus, the 267-residue chain is MTIETQEEPPEIKVYLPRVGITNLKSVAKIEWKGRIYTFIPTFEVAIDLPEEKKGIHMSRLVESITETMSEAVEEEVKKVHTSLEDLALCIIRRIEKKHSHKRAEVWIKSTLILERQTPASGKTSYEPYDVEVGVIKNSDGSIKKVLKVKVIGNTACPHAMANNQGKTHIQRAIAELEIETHFNEDIALEDMIEVVESSFSSPTYTLLKTPDENAVVRRMYENPKFVEDVAREIVYKARNRFKGKIHVKVISHESIHKHDVIAEVWA.

This sequence belongs to the GTP cyclohydrolase IV family. Homodimer. Fe(2+) serves as cofactor.

The catalysed reaction is GTP + H2O = 7,8-dihydroneopterin 2',3'-cyclic phosphate + formate + diphosphate + H(+). It functions in the pathway cofactor biosynthesis; 5,6,7,8-tetrahydromethanopterin biosynthesis. In terms of biological role, converts GTP to 7,8-dihydro-D-neopterin 2',3'-cyclic phosphate, the first intermediate in the biosynthesis of coenzyme methanopterin. The polypeptide is GTP cyclohydrolase MptA (Pyrococcus furiosus (strain ATCC 43587 / DSM 3638 / JCM 8422 / Vc1)).